The primary structure comprises 83 residues: Large ribosomal subunit protein eL14 (83 aa).

This sequence belongs to the eukaryotic ribosomal protein eL14 family. In terms of assembly, part of the 50S ribosomal subunit.

This chain is Large ribosomal subunit protein eL14, found in Thermococcus kodakarensis (strain ATCC BAA-918 / JCM 12380 / KOD1) (Pyrococcus kodakaraensis (strain KOD1)).